The sequence spans 133 residues: Ribonuclease P protein component (133 aa).

Belongs to the RnpA family. As to quaternary structure, consists of a catalytic RNA component (M1 or rnpB) and a protein subunit.

It catalyses the reaction Endonucleolytic cleavage of RNA, removing 5'-extranucleotides from tRNA precursor.. Functionally, RNaseP catalyzes the removal of the 5'-leader sequence from pre-tRNA to produce the mature 5'-terminus. It can also cleave other RNA substrates such as 4.5S RNA. The protein component plays an auxiliary but essential role in vivo by binding to the 5'-leader sequence and broadening the substrate specificity of the ribozyme. The polypeptide is Ribonuclease P protein component (Corynebacterium efficiens (strain DSM 44549 / YS-314 / AJ 12310 / JCM 11189 / NBRC 100395)).